We begin with the raw amino-acid sequence, 184 residues long: ATP synthase subunit b, chloroplastic (184 aa).

A helical membrane pass occupies residues 27 to 49 (LATNPINLSVVFGVLIFFGKGVL).

This sequence belongs to the ATPase B chain family. In terms of assembly, F-type ATPases have 2 components, F(1) - the catalytic core - and F(0) - the membrane proton channel. F(1) has five subunits: alpha(3), beta(3), gamma(1), delta(1), epsilon(1). F(0) has four main subunits: a(1), b(1), b'(1) and c(10-14). The alpha and beta chains form an alternating ring which encloses part of the gamma chain. F(1) is attached to F(0) by a central stalk formed by the gamma and epsilon chains, while a peripheral stalk is formed by the delta, b and b' chains.

Its subcellular location is the plastid. It localises to the chloroplast thylakoid membrane. Its function is as follows. F(1)F(0) ATP synthase produces ATP from ADP in the presence of a proton or sodium gradient. F-type ATPases consist of two structural domains, F(1) containing the extramembraneous catalytic core and F(0) containing the membrane proton channel, linked together by a central stalk and a peripheral stalk. During catalysis, ATP synthesis in the catalytic domain of F(1) is coupled via a rotary mechanism of the central stalk subunits to proton translocation. Functionally, component of the F(0) channel, it forms part of the peripheral stalk, linking F(1) to F(0). This Arabidopsis thaliana (Mouse-ear cress) protein is ATP synthase subunit b, chloroplastic.